We begin with the raw amino-acid sequence, 440 residues long: Glutamyl-tRNA reductase (440 aa).

Substrate contacts are provided by residues 50–53 (TCNR), Ser109, 114–116 (EPQ), and Gln120. The Nucleophile role is filled by Cys51. 189–194 (GAGEMA) contacts NADP(+).

Belongs to the glutamyl-tRNA reductase family. In terms of assembly, homodimer.

It catalyses the reaction (S)-4-amino-5-oxopentanoate + tRNA(Glu) + NADP(+) = L-glutamyl-tRNA(Glu) + NADPH + H(+). It participates in porphyrin-containing compound metabolism; protoporphyrin-IX biosynthesis; 5-aminolevulinate from L-glutamyl-tRNA(Glu): step 1/2. Its function is as follows. Catalyzes the NADPH-dependent reduction of glutamyl-tRNA(Glu) to glutamate 1-semialdehyde (GSA). The polypeptide is Glutamyl-tRNA reductase (Nitratidesulfovibrio vulgaris (strain DP4) (Desulfovibrio vulgaris)).